A 298-amino-acid polypeptide reads, in one-letter code: Probable 3-hydroxyacyl-CoA dehydrogenase F54C8.1 (298 aa).

The protein belongs to the 3-hydroxyacyl-CoA dehydrogenase family. Homodimer.

The protein resides in the mitochondrion matrix. The catalysed reaction is a (3S)-3-hydroxyacyl-CoA + NAD(+) = a 3-oxoacyl-CoA + NADH + H(+). It functions in the pathway lipid metabolism; fatty acid beta-oxidation. This Caenorhabditis elegans protein is Probable 3-hydroxyacyl-CoA dehydrogenase F54C8.1.